An 88-amino-acid polypeptide reads, in one-letter code: Potassium channel toxin MeuTXKbeta3-meucin-24 (88 aa).

An N-terminal signal peptide occupies residues 1 to 22; that stretch reads MMKQQFFLFLAVIVMISSVIEA. The 34-residue stretch at 55-88 folds into the BetaSPN-type CS-alpha/beta domain; the sequence is EYACPVIEKWCEDHCQAKNAIGRCENTECKCLSK. Disulfide bonds link Cys58–Cys78, Cys65–Cys83, and Cys69–Cys85.

This sequence belongs to the long chain scorpion toxin family. Class 2 subfamily. In terms of tissue distribution, expressed by the venom gland.

It localises to the secreted. Functionally, inhibits voltage-gated potassium channels. The synthetic meucin-24 inhibits the development of P.berghei ookinetes, kills intraerythrocytic P.falciparum, and is cytotoxic to the Drosophila S2 cells at micromolar concentrations. No antibacterial, antifungal and hemolytic activities have been found at micromolar concentrations. This chain is Potassium channel toxin MeuTXKbeta3-meucin-24, found in Mesobuthus eupeus (Lesser Asian scorpion).